The following is a 104-amino-acid chain: Thioredoxin (104 aa).

The 103-residue stretch at 2-104 folds into the Thioredoxin domain; the sequence is AIVKATDQSF…ALQELVNKHL (103 aa). An intrachain disulfide couples cysteine 29 to cysteine 32.

The protein belongs to the thioredoxin family.

Functionally, participates in various redox reactions through the reversible oxidation of its active center dithiol to a disulfide and catalyzes dithiol-disulfide exchange reactions. In Bacillus subtilis (strain 168), this protein is Thioredoxin (trxA).